The primary structure comprises 145 residues: Ribonuclease H (145 aa).

Positions methionine 1–aspartate 141 constitute an RNase H type-1 domain. Mg(2+) contacts are provided by aspartate 9, glutamate 47, aspartate 69, and aspartate 133.

This sequence belongs to the RNase H family. Monomer. Mg(2+) serves as cofactor.

It is found in the cytoplasm. It carries out the reaction Endonucleolytic cleavage to 5'-phosphomonoester.. Endonuclease that specifically degrades the RNA of RNA-DNA hybrids. The polypeptide is Ribonuclease H (Hydrogenovibrio crunogenus (strain DSM 25203 / XCL-2) (Thiomicrospira crunogena)).